A 637-amino-acid polypeptide reads, in one-letter code: MAETAASPAHKVYNIAHWSDGYISVNGQGEVEICPDRGRSDARINLPALTRSLAEAGVPLPVLIRFTDILHDRVNKLCNAFNKVTQEQGYRGRYTAVYPIKVNQQRRVVEELLSAEPAASANQVGLEAGSKPELMAVLALAKQAGSVIVCNGYKDREYIRLALIGQKLGHRVFIVVEKQSELPLILEEAKKLGISPLIGVRARLATIGKGNWQNTGGEKSKFGLSASQVLDVVDTLKQAGALGTLQLLHFHLGSQIANIRDIQTGLRECARFYTELHAMGAPIGTVDIGGGLGVDYEGTRSRSSCSMNYSVFEYAYNVVHVLQSECDRQGIPHPDLISESGRALTAHHSVLVTNVIDREYPDNREPTEPAAEAPAPLQDLWRDLESLQDEDSPRSLAEIYHDILHAMADVHAQFAHGLLSLQERAQAETLYVRCCRMLRAELDSANRAHREIIDELNEKLAEKLFVNFSLFQSLPDVWGIDQIFPVMPINGLNRSLNRRAVIQDITCDSDGRIDQYVDGQGIETTLPLPEHDPESPLLMGFFMTGAYQEILGDMHNLFGDTHSVDVKLDQQGQYQVGEPITGDTVAKVLRYVNFEPANLLEAYRQKFRHSGLSEELQQTLLAELSSGLEGYTYLEEG.

Position 101 is an N6-(pyridoxal phosphate)lysine (Lys-101). 286–296 is a binding site for substrate; that stretch reads VDIGGGLGVDY.

It belongs to the Orn/Lys/Arg decarboxylase class-II family. SpeA subfamily. Mg(2+) serves as cofactor. Requires pyridoxal 5'-phosphate as cofactor.

It catalyses the reaction L-arginine + H(+) = agmatine + CO2. It participates in amine and polyamine biosynthesis; agmatine biosynthesis; agmatine from L-arginine: step 1/1. Functionally, catalyzes the biosynthesis of agmatine from arginine. The polypeptide is Biosynthetic arginine decarboxylase (Marinobacter nauticus (strain ATCC 700491 / DSM 11845 / VT8) (Marinobacter aquaeolei)).